Reading from the N-terminus, the 339-residue chain is tRNA N6-adenosine threonylcarbamoyltransferase (339 aa).

His-114 and His-118 together coordinate Fe cation. Substrate contacts are provided by residues 137 to 141 (VVSGG), Asp-170, Gly-183, Asp-187, and Asn-277. Residue Asp-305 coordinates Fe cation.

Belongs to the KAE1 / TsaD family. Fe(2+) is required as a cofactor.

It is found in the cytoplasm. It carries out the reaction L-threonylcarbamoyladenylate + adenosine(37) in tRNA = N(6)-L-threonylcarbamoyladenosine(37) in tRNA + AMP + H(+). In terms of biological role, required for the formation of a threonylcarbamoyl group on adenosine at position 37 (t(6)A37) in tRNAs that read codons beginning with adenine. Is involved in the transfer of the threonylcarbamoyl moiety of threonylcarbamoyl-AMP (TC-AMP) to the N6 group of A37, together with TsaE and TsaB. TsaD likely plays a direct catalytic role in this reaction. The protein is tRNA N6-adenosine threonylcarbamoyltransferase of Clostridium perfringens (strain ATCC 13124 / DSM 756 / JCM 1290 / NCIMB 6125 / NCTC 8237 / Type A).